The primary structure comprises 205 residues: Glycerol-3-phosphate acyltransferase (205 aa).

Residues 1–3 lie on the Periplasmic side of the membrane; it reads MSA. The helical transmembrane segment at 4 to 24 threads the bilayer; it reads IAPGMILIAYLCGSISSAILV. Residues 25–52 lie on the Cytoplasmic side of the membrane; sequence CRLCGLPDPRTSGSGNPGATNVLRIGGK. A helical transmembrane segment spans residues 53-73; the sequence is GAAVAVLIFDVLKGMLPVWGA. The Periplasmic segment spans residues 74–80; sequence YELGVSP. Residues 81 to 101 traverse the membrane as a helical segment; it reads FWLGLIAIAACLGHIWPVFFG. Topologically, residues 102–111 are cytoplasmic; that stretch reads FKGGKGVATA. A helical membrane pass occupies residues 112-132; the sequence is FGAIAPISWDLTGVMAGTWLL. The Periplasmic portion of the chain corresponds to 133–137; the sequence is TVLLS. The helical transmembrane segment at 138-158 threads the bilayer; that stretch reads GYSSLGAIVSALIAPFYVWWF. Topologically, residues 159–205 are cytoplasmic; that stretch reads KPQFTFPVSMLSCLILLRHHDNIQRLWRRQETKIWTKFKRKREKDPE.

It belongs to the PlsY family. In terms of assembly, probably interacts with PlsX.

It is found in the cell inner membrane. It carries out the reaction sn-glycerol 3-phosphate + an acyl-CoA = a 1-acyl-sn-glycero-3-phosphate + CoA. It catalyses the reaction a fatty acyl-[ACP] + sn-glycerol 3-phosphate = a 1-acyl-sn-glycero-3-phosphate + holo-[ACP]. It participates in lipid metabolism; phospholipid metabolism. Catalyzes the transfer of an acyl group from acyl-ACP to glycerol-3-phosphate (G3P) to form lysophosphatidic acid (LPA). This enzyme can also utilize acyl-CoA as fatty acyl donor, but not acyl-PO(4). The polypeptide is Glycerol-3-phosphate acyltransferase (Shigella flexneri serotype 5b (strain 8401)).